The chain runs to 467 residues: Dihydrolipoyl dehydrogenase (467 aa).

FAD is bound by residues 33-41 (EPKYWGGIC), lysine 50, and glycine 113. Cysteines 41 and 46 form a disulfide. NAD(+) contacts are provided by residues 181–185 (GAGAI), glutamate 204, and 269–272 (AIGF). Aspartate 312 and alanine 320 together coordinate FAD. The active-site Proton acceptor is the histidine 446.

It belongs to the class-I pyridine nucleotide-disulfide oxidoreductase family. As to quaternary structure, homodimer. Part of the PDH complex, consisting of multiple copies of AceE (E1), DlaT (E2) and Lpd (E3), and of the BCKADH complex, consisting of multiple copies of BkdA/BkdB (E1), BkdC (E2) and Lpd (E3). FAD serves as cofactor.

It is found in the cytoplasm. The catalysed reaction is N(6)-[(R)-dihydrolipoyl]-L-lysyl-[protein] + NAD(+) = N(6)-[(R)-lipoyl]-L-lysyl-[protein] + NADH + H(+). Its function is as follows. Lipoamide dehydrogenase is a component of the alpha-ketoacid dehydrogenase complexes. Catalyzes the reoxidation of dihydrolipoyl groups which are covalently attached to the lipoate acyltransferase components (E2) of the complexes. This is Dihydrolipoyl dehydrogenase (lpd) from Mycobacterium leprae (strain TN).